The sequence spans 386 residues: Putative matrix metalloproteinase (386 aa).

An N-terminal signal peptide occupies residues 1–34 (MPTAHFQHSIRYLNVTNMLIFSIISFLLIYQTNS). 2 N-linked (GlcNAc...) asparagine; by host glycosylation sites follow: asparagine 14 and asparagine 58. Histidine 186 provides a ligand contact to Zn(2+). The active site involves glutamate 187. 2 residues coordinate Zn(2+): histidine 190 and histidine 196. The interval 235-258 (NEQSTHQSTRHRPHRRPSPDGSCR) is disordered.

Belongs to the peptidase M10A family. Requires Zn(2+) as cofactor.

The sequence is that of Putative matrix metalloproteinase from Spodoptera frugiperda (Fall armyworm).